Consider the following 213-residue polypeptide: Putative transmembrane protein DDB_G0267860 (213 aa).

The first 22 residues, 1 to 22 (MKTKILLLNFIIIFFLINVNLA), serve as a signal peptide directing secretion. At 23-191 (IKKDSPFKEI…SSKFDSSTSS (169 aa)) the chain is on the extracellular side. Residues Asn92 and Asn114 are each glycosylated (N-linked (GlcNAc...) asparagine). Residues 192-212 (ISINTLAILSLLFLIFINKLI) traverse the membrane as a helical segment. Position 213 (Asn213) is a topological domain, cytoplasmic.

The protein localises to the membrane. This Dictyostelium discoideum (Social amoeba) protein is Putative transmembrane protein DDB_G0267860.